Reading from the N-terminus, the 95-residue chain is Protein TusB (95 aa).

It belongs to the DsrH/TusB family. As to quaternary structure, heterohexamer, formed by a dimer of trimers. The hexameric TusBCD complex contains 2 copies each of TusB, TusC and TusD. The TusBCD complex interacts with TusE.

It is found in the cytoplasm. In terms of biological role, part of a sulfur-relay system required for 2-thiolation of 5-methylaminomethyl-2-thiouridine (mnm(5)s(2)U) at tRNA wobble positions. This is Protein TusB from Escherichia coli O81 (strain ED1a).